We begin with the raw amino-acid sequence, 1538 residues long: MFNQKIVDQAPRKLTSRLTNSSSLISIEKERDACGVGFIADVNNVANHKIVVQALEALTCMEHRGACSADRDSGDGAGITTAIPWNLFQKSLQNQNIKFEQNDSVGVGMLFLPAHKLKESKLIIETVLKEENLEIIGWRLVPTVQEVLGKQAYLNKPHVEQVFCKSSNLSKDRLEQQLFLVRKKIEKYIGINGKDWAHEFYICSLSCYTIVYKGMMRSAVLGQFYQDLYHSEYTSSFAIYHRRFSTNTMPKWPLAQPMRFVSHNGEINTLLGNLNWMQSREPLLQSKVWKDRIHELKPITNKDNSDSANLDAAVELLIASGRSPEEALMILVPEAFQNQPDFANNTEISDFYEYYSGLQEPWDGPALVVFTNGKVIGATLDRNGLRPARYVITKDNLVIVSSESGVVQVEPGNVKSKGRLGPGQMISVDIFSHKILNNKEIKTSVTTKIPYGELLTDARQILEHKPFLSDQQVDIKKLMQLQTAFGYTNEDVELVIEHMASQAKEPTFCMGDDIPLSILSEKSHILYDYFKQRFAQVTNPAIDPLRESLVMSLAIQIGHKSNLLDDQPTLAKHIKLESPVINEGELNAIFESKLSCIRINTLFQLEDGPKNFKQQIQQLCENASQAILDGNNILVLSDKNNSLDSEKVSIPPLLAVGAVHHHLINKGLRQEASILVETAQCWSTHHFACLIGYGASAICPYLAFETARHWWSNPKTKMLMSKGRLPACNIQEAQANYKKAVEAGLLKILSKMGISLLSSYHGAQIFEILGLGSEVVNLAFKGTTSQIGGLSMIELGRETVNIHSKAFSEVKTKKLANYGFVQYRPGGEYHINNPEMSKALHQAVRGYNPEYYNNYQSLLQNRPPTALRDLLKLQSNRAPISIDEVESIEDILQKFCTGGMSLGALSRETHETLAIAMNRIGGKSNSGEGGEDPVRFKILNDVNSSGTSPLLPHLKGLKNGDTASSAIKQIASGRFGVTPEYLMNAKQLEIKIAQGAKPGEGGQLPGKKISPYIATLRKCKPGVPLISPPPHHDIYSIEDLSQLIFDLHQINPKAKISVKLVSEIGIGTIAAGVAKGNADIIQISGHDGGTGASPLSSIKHAGSPWELGLSEVHQLLAENQLRDRVTLRVDGGLRTGSDIVLAAIMGAEEFGFGTVAMIATGCIMARICHTNKCPVGVATQREELRARFSGVPEALVNFFLFIGNEVREILASLGYKSLDDITGQNHLLIKNTDINLTKTNGIQLDTLININNNTWTKFNSVHTNGPVMDDDILAIPEVSNAIKLETEITKHFKIANTNRTVGTRLSGIIAKNYGNTGFKGLIKLNFYGSAGQSFGAFLASGINLKLMGEANDYVGKGMNGGSIVIVPPAGTIYEDNNQVIIGNTCLYGATGGYLFAQGQAGERFAVRNSLAESVVEGVGDHACEYMTGGVIVVLGKAGRNVGAGMTGGLAYFLDEDENFIDRVNSEIVKIQRVITKAGEEQLKNLIENHAAKTGSLKAHTILEKWNSYLPQFWQVVPPSEANIDETNPTYSSNTIAAC.

The active-site For GATase activity is C34. Positions 34 to 431 (CGVGFIADVN…PGQMISVDIF (398 aa)) constitute a Glutamine amidotransferase type-2 domain. Residue 1109–1166 (LSEVHQLLAENQLRDRVTLRVDGGLRTGSDIVLAAIMGAEEFGFGTVAMIATGCIMAR) participates in FMN binding. Residues C1162, C1168, and C1173 each coordinate [3Fe-4S] cluster.

Belongs to the glutamate synthase family. Monomer. [3Fe-4S] cluster is required as a cofactor. The cofactor is FAD. Requires FMN as cofactor.

Its subcellular location is the plastid. It is found in the chloroplast stroma. The catalysed reaction is 2 oxidized [2Fe-2S]-[ferredoxin] + 2 L-glutamate = L-glutamine + 2 reduced [2Fe-2S]-[ferredoxin] + 2-oxoglutarate + 2 H(+). The protein operates within amino-acid biosynthesis; L-glutamate biosynthesis via GLT pathway; L-glutamate from 2-oxoglutarate and L-glutamine (ferredoxin route): step 1/1. It functions in the pathway energy metabolism; nitrogen metabolism. The sequence is that of Ferredoxin-dependent glutamate synthase (gltB) from Pyropia yezoensis (Susabi-nori).